The primary structure comprises 365 residues: DNA replication and repair protein RecF (365 aa).

Position 30–37 (30–37 (GRNAQGKT)) interacts with ATP.

Belongs to the RecF family.

The protein resides in the cytoplasm. Functionally, the RecF protein is involved in DNA metabolism; it is required for DNA replication and normal SOS inducibility. RecF binds preferentially to single-stranded, linear DNA. It also seems to bind ATP. This Streptococcus pneumoniae serotype 2 (strain D39 / NCTC 7466) protein is DNA replication and repair protein RecF.